The sequence spans 202 residues: Nucleoside triphosphate pyrophosphatase (202 aa).

The active-site Proton acceptor is the D77.

The protein belongs to the Maf family. A divalent metal cation is required as a cofactor.

Its subcellular location is the cytoplasm. It carries out the reaction a ribonucleoside 5'-triphosphate + H2O = a ribonucleoside 5'-phosphate + diphosphate + H(+). The catalysed reaction is a 2'-deoxyribonucleoside 5'-triphosphate + H2O = a 2'-deoxyribonucleoside 5'-phosphate + diphosphate + H(+). Nucleoside triphosphate pyrophosphatase. May have a dual role in cell division arrest and in preventing the incorporation of modified nucleotides into cellular nucleic acids. In Rickettsia canadensis (strain McKiel), this protein is Nucleoside triphosphate pyrophosphatase.